A 179-amino-acid chain; its full sequence is FADH(2)-dependent resorcinol hydroxylase, reductase component (179 aa).

Belongs to the non-flavoprotein flavin reductase family. The FADH(2)-dependent resorcinol hydroxylase is composed of two subunits, GraA (the oxygenase component) and GraD (the reductase component). Both subunits are required for activity.

The enzyme catalyses FADH2 + NAD(+) = FAD + NADH + 2 H(+). It functions in the pathway aromatic compound metabolism. Functionally, involved in the gamma-resorcylate (2,6-dihydroxybenzoate) catabolism. Reductase component of the resorcinol hydroxylase, which catalyzes the FADPH-dependent conversion of resorcinol to hydroxyquinol. Catalyzes the reduction of FAD by NADH. The reduced flavin is then transferred to the oxygenase component GraA. This chain is FADH(2)-dependent resorcinol hydroxylase, reductase component, found in Rhizobium sp. (strain MTP-10005).